We begin with the raw amino-acid sequence, 499 residues long: Ribose import ATP-binding protein RbsA (499 aa).

ABC transporter domains lie at 3–240 and 250–494; these read VEMS…VGRE and LEPG…TGGD. Position 35–42 (35–42) interacts with ATP; that stretch reads GENGAGKS.

Belongs to the ABC transporter superfamily. Ribose importer (TC 3.A.1.2.1) family. The complex is composed of an ATP-binding protein (RbsA), two transmembrane proteins (RbsC) and a solute-binding protein (RbsB).

It localises to the cell membrane. The enzyme catalyses D-ribose(out) + ATP + H2O = D-ribose(in) + ADP + phosphate + H(+). Part of the ABC transporter complex RbsABC involved in ribose import. Responsible for energy coupling to the transport system. The sequence is that of Ribose import ATP-binding protein RbsA from Shouchella clausii (strain KSM-K16) (Alkalihalobacillus clausii).